The following is a 384-amino-acid chain: Spermidine/putrescine import ATP-binding protein PotA (384 aa).

One can recognise an ABC transporter domain in the interval 6–238 (ITFNNVSKTF…PINHFVANFI (233 aa)). An ATP-binding site is contributed by 40–47 (GASGSGKS).

The protein belongs to the ABC transporter superfamily. Spermidine/putrescine importer (TC 3.A.1.11.1) family. As to quaternary structure, the complex is composed of two ATP-binding proteins (PotA), two transmembrane proteins (PotB and PotC) and a solute-binding protein (PotD).

The protein localises to the cell membrane. It carries out the reaction ATP + H2O + polyamine-[polyamine-binding protein]Side 1 = ADP + phosphate + polyamineSide 2 + [polyamine-binding protein]Side 1.. Functionally, part of the ABC transporter complex PotABCD involved in spermidine/putrescine import. Responsible for energy coupling to the transport system. The chain is Spermidine/putrescine import ATP-binding protein PotA from Streptococcus pyogenes serotype M28 (strain MGAS6180).